A 312-amino-acid polypeptide reads, in one-letter code: D-alanine--D-alanine ligase (312 aa).

Residues 108-308 enclose the ATP-grasp domain; that stretch reads KLVWQQTGIP…YSELVVKVLS (201 aa). 138–193 lines the ATP pocket; that stretch reads VAKLGVPLFVKPASEGSSVAVEKVKSADALPAALEEAAKHDKIVIVEKSIEGGGEY. The Mg(2+) site is built by aspartate 262, glutamate 275, and asparagine 277.

This sequence belongs to the D-alanine--D-alanine ligase family. The cofactor is Mg(2+). It depends on Mn(2+) as a cofactor.

It is found in the cytoplasm. The enzyme catalyses 2 D-alanine + ATP = D-alanyl-D-alanine + ADP + phosphate + H(+). It participates in cell wall biogenesis; peptidoglycan biosynthesis. In terms of biological role, cell wall formation. This Burkholderia mallei (strain NCTC 10247) protein is D-alanine--D-alanine ligase.